Consider the following 176-residue polypeptide: NAD(P)H-quinone oxidoreductase subunit 6, chloroplastic (176 aa).

5 consecutive transmembrane segments (helical) span residues 10–30 (ILLV…VLLT), 32–52 (PISS…FYIP), 61–81 (AQLL…VMFM), 92–112 (LWTI…FSLI), and 152–172 (FYLP…GAIA).

This sequence belongs to the complex I subunit 6 family. NDH is composed of at least 16 different subunits, 5 of which are encoded in the nucleus.

The protein localises to the plastid. It is found in the chloroplast thylakoid membrane. The enzyme catalyses a plastoquinone + NADH + (n+1) H(+)(in) = a plastoquinol + NAD(+) + n H(+)(out). It catalyses the reaction a plastoquinone + NADPH + (n+1) H(+)(in) = a plastoquinol + NADP(+) + n H(+)(out). Its function is as follows. NDH shuttles electrons from NAD(P)H:plastoquinone, via FMN and iron-sulfur (Fe-S) centers, to quinones in the photosynthetic chain and possibly in a chloroplast respiratory chain. The immediate electron acceptor for the enzyme in this species is believed to be plastoquinone. Couples the redox reaction to proton translocation, and thus conserves the redox energy in a proton gradient. The chain is NAD(P)H-quinone oxidoreductase subunit 6, chloroplastic (ndhG) from Chloranthus spicatus (Chulantree).